A 569-amino-acid polypeptide reads, in one-letter code: MAAARRAAGLLPLLLSSPSRARLPHRQALALTPPLLRPHRLYSHSPKPSSSAAFSAFASASNGAPAGRARELHLYNTKSRRKELFQPRVPGGEVGMYVCGVTPYDDSHIGHARAYVAFDVLYRYLRYLDHKVRYVRNFTDIDDKIIARANQLGEDPFSLSKRYSDDFLSDMANLHCLPPSVEPRVSDHIDQIINMIKQIIDNDCAYAIGGDVYFSVENFPEYGDLSGRKLDDNRAGERVAVDERKKNPADFALWKAAKDGEPSWDSPWGPGRPGWHIECSAMSAHYLGHSFDIHGGGEDLIFPHHENEIAQSRAACCDSSINYWIHNGFVNVNSQKMSKSLGNFVTIRKVTELYHPLALRMFLLGTHYRSPINYTIEQLNVASDRLYYTYQTLQDCEESCQQHQSKAGDPLPVNTTNCIQKLHDEFETSMSDDLHTSVALAAISEPLKVMNDLLHTRKGKKQEKRLESLSAMEEKIRMVLSVLGLLPSSYYEALQQLREKALRRASMTEEQVLQKIEERTSARKAKQYEKSDEIRKELAAVGIALMDGPDGTTWRPSVPLSEQGVVAST.

The transit peptide at methionine 1 to tyrosine 42 directs the protein to the chloroplast and mitochondrion. A Zn(2+)-binding site is contributed by cysteine 99. The 'HIGH' region signature appears at valine 101–histidine 111. Residues cysteine 279, histidine 304, and glutamate 308 each contribute to the Zn(2+) site. A 'KMSKS' region motif is present at residues lysine 336–serine 340. Lysine 339 serves as a coordination point for ATP.

The protein belongs to the class-I aminoacyl-tRNA synthetase family. The cofactor is Zn(2+).

It localises to the plastid. It is found in the chloroplast. The protein localises to the mitochondrion. It catalyses the reaction tRNA(Cys) + L-cysteine + ATP = L-cysteinyl-tRNA(Cys) + AMP + diphosphate. Nuclear genome-encoded factor required for normal assembly of chloroplast polysomes. The sequence is that of Cysteine--tRNA ligase CPS1 homolog, chloroplastic/mitochondrial from Oryza sativa subsp. japonica (Rice).